A 1140-amino-acid chain; its full sequence is Receptor-type guanylate cyclase gcy-3 (1140 aa).

The first 21 residues, 1–21, serve as a signal peptide directing secretion; it reads MKNVFQLLIPLFFHLFSLVSL. The Extracellular portion of the chain corresponds to 22–495; the sequence is QNIPVSTGTT…CPLPFWEQYG (474 aa). Asn-220, Asn-301, Asn-349, Asn-385, Asn-418, Asn-441, and Asn-459 each carry an N-linked (GlcNAc...) asparagine glycan. A helical membrane pass occupies residues 496-516; the sequence is ILIFVGAGVFLIMITTNLICF. The Cytoplasmic segment spans residues 517–1140; sequence LFMIKNRREE…RQYKMDTLKI (624 aa). In terms of domain architecture, Protein kinase spans 538–826; that stretch reads FVKLRELERK…NICEQLRDLM (289 aa). ATP is bound by residues 544–552 and Lys-582; that span reads LERKSKGTS. In terms of domain architecture, Guanylate cyclase spans 897–1027; it reads TVFFSDVVKF…DTVNTASRME (131 aa). A disordered region spans residues 1083–1140; it reads PSISNRSTPPVTQERFTVRAPDTPEARSVSSHGSRPSSNHNNNNDPLYRQYKMDTLKI. Residues 1084 to 1097 show a composition bias toward polar residues; it reads SISNRSTPPVTQER. Residues 1109–1126 show a composition bias toward low complexity; the sequence is RSVSSHGSRPSSNHNNNN.

This sequence belongs to the adenylyl cyclase class-4/guanylyl cyclase family. Expressed asymmetrically in ASE right (ASER) sensory neuron and bilaterally in ASI sensory neurons. Expressed in PVT interneuron.

The protein localises to the cell membrane. The catalysed reaction is GTP = 3',5'-cyclic GMP + diphosphate. Guanylate cyclase involved in the production of the second messenger cGMP. The chain is Receptor-type guanylate cyclase gcy-3 from Caenorhabditis elegans.